Here is a 396-residue protein sequence, read N- to C-terminus: Aspartate aminotransferase (396 aa).

G34, W130, and N183 together coordinate L-aspartate. K246 is modified (N6-(pyridoxal phosphate)lysine). An L-aspartate-binding site is contributed by R374.

It belongs to the class-I pyridoxal-phosphate-dependent aminotransferase family. In terms of assembly, homodimer. It depends on pyridoxal 5'-phosphate as a cofactor.

The protein resides in the cytoplasm. It catalyses the reaction L-aspartate + 2-oxoglutarate = oxaloacetate + L-glutamate. The protein is Aspartate aminotransferase (aspC) of Haemophilus influenzae (strain ATCC 51907 / DSM 11121 / KW20 / Rd).